The following is a 397-amino-acid chain: MKKEKVVLAYSGGLDTSVAIKWLMQKYSLDVITLTVDIGQGINLDEIKNKAENLGVEKAYVLDLKEEFVKDYIIPAIKSNAMYERVYPLATALSRPLIAKYLVKIAKENGAKYVAHGCTGKGNDQVRIDLGVKALAPDLEIIAPVREWNFSREEEIEYALENNIPIPVSRKSPYSIDENLWGRSIEGGILEDPWQEPPEDIYLWTRFENREPSYIEITFERGVPVELNGVRKDVVEIIEELNKIAGSYGIGRIDHIENRLVGIKSREIYEAPAAIVIIRAHEALEDMVLPRELAHYKKMLEDKYAELVYYGLWFDPFREALQAFMDKTQDRVTGKVKIKLLPWSFSIVGRESPYSLYDHGLATYDKGSTFSTESAVGFIKLFGLQNYLYALKGGNND.

ATP is bound at residue Ala-9–Ser-17. Tyr-87 lines the L-citrulline pocket. An ATP-binding site is contributed by Gly-117. Residues Thr-119, Asn-123, and Asp-124 each contribute to the L-aspartate site. Residue Asn-123 coordinates L-citrulline. Residues Arg-127, Ser-175, Ser-184, Glu-257, and Tyr-269 each contribute to the L-citrulline site.

This sequence belongs to the argininosuccinate synthase family. Type 1 subfamily. In terms of assembly, homotetramer.

The protein resides in the cytoplasm. It catalyses the reaction L-citrulline + L-aspartate + ATP = 2-(N(omega)-L-arginino)succinate + AMP + diphosphate + H(+). It participates in amino-acid biosynthesis; L-arginine biosynthesis; L-arginine from L-ornithine and carbamoyl phosphate: step 2/3. This is Argininosuccinate synthase from Dictyoglomus thermophilum (strain ATCC 35947 / DSM 3960 / H-6-12).